Here is a 360-residue protein sequence, read N- to C-terminus: Nucleoporin SEH1 (360 aa).

6 WD repeats span residues 10–49, 55–96, 111–152, 160–210, 217–258, and 276–315; these read DHKD…DWHC, THSG…SNDK, DSRT…NLSQ, SCKL…RKYA, TVTD…KELT, and NHNS…NWKC. K12 participates in a covalent cross-link: Glycyl lysine isopeptide (Lys-Gly) (interchain with G-Cter in SUMO2). Phosphoserine is present on residues S179 and S190. Positions 324 to 354 are enriched in polar residues; the sequence is SPVNGSSQQGTSNPSLGSTIPSLQNSLNGSS. A disordered region spans residues 324 to 360; the sequence is SPVNGSSQQGTSNPSLGSTIPSLQNSLNGSSAGRKHS.

The protein belongs to the WD repeat SEC13 family. Component of the Nup107-160 subcomplex of the nuclear pore complex (NPC). The Nup107-160 subcomplex includes NUP160, NUP133, NUP107, NUP98, NUP85, NUP43, NUP37, SEH1 and SEC13. The SEH1 subunit appears to be only weakly associated with the Nup107-160 subcomplex. Component of the GATOR2 subcomplex, composed of MIOS, SEC13, SEH1L, WDR24 and WDR59. The GATOR2 complex interacts with CASTOR1 and CASTOR2; the interaction is negatively regulated by arginine. The GATOR2 complex interacts with SESN1, SESN2 and SESN3; the interaction is negatively regulated by amino acids. SESN1, SESN2 and SESN3 convey leucine availability via direct interaction with SEH1L and WDR24.

It is found in the chromosome. The protein localises to the centromere. The protein resides in the kinetochore. Its subcellular location is the nucleus. It localises to the nuclear pore complex. It is found in the lysosome membrane. With respect to regulation, the GATOR2 complex is negatively regulated by the upstream amino acid sensors CASTOR1 and SESN2, which sequester the GATOR2 complex in absence of amino acids. In the presence of abundant amino acids, GATOR2 is released from CASTOR1 and SESN2 and activated. Functionally, component of the Nup107-160 subcomplex of the nuclear pore complex (NPC). The Nup107-160 subcomplex is required for the assembly of a functional NPC. The Nup107-160 subcomplex is also required for normal kinetochore microtubule attachment, mitotic progression and chromosome segregation. This subunit plays a role in recruitment of the Nup107-160 subcomplex to the kinetochore. In terms of biological role, as a component of the GATOR2 complex, functions as an activator of the amino acid-sensing branch of the mTORC1 signaling pathway. The GATOR2 complex indirectly activates mTORC1 through the inhibition of the GATOR1 subcomplex. GATOR2 probably acts as an E3 ubiquitin-protein ligase toward GATOR1. In the presence of abundant amino acids, the GATOR2 complex mediates ubiquitination of the NPRL2 core component of the GATOR1 complex, leading to GATOR1 inactivation. In the absence of amino acids, GATOR2 is inhibited, activating the GATOR1 complex. Within the GATOR2 complex, SEC13 and SEH1L are required to stabilize the complex. This Homo sapiens (Human) protein is Nucleoporin SEH1 (SEH1L).